The primary structure comprises 248 residues: Spherulin-1B (248 aa).

The N-terminal stretch at 1–20 is a signal peptide; sequence MQVRNILVALVVVCFAVSEA. Residues 61–207 form the Cupin type-1 domain; it reads FDFKNSKLGV…SLNISSIQTV (147 aa). Positions 110, 112, 117, and 157 each coordinate Mn(2+). N200 carries an N-linked (GlcNAc...) asparagine glycan.

Belongs to the germin family.

Its subcellular location is the secreted. The protein localises to the cell wall. In Physarum polycephalum (Slime mold), this protein is Spherulin-1B.